A 210-amino-acid chain; its full sequence is Imidazole glycerol phosphate synthase subunit HisH (210 aa).

Residues 1–210 (MIAILDYGMG…KLLENFIRFI (210 aa)) enclose the Glutamine amidotransferase type-1 domain. Catalysis depends on Cys79, which acts as the Nucleophile. Residues His191 and Glu193 contribute to the active site.

In terms of assembly, heterodimer of HisH and HisF.

The protein resides in the cytoplasm. The catalysed reaction is 5-[(5-phospho-1-deoxy-D-ribulos-1-ylimino)methylamino]-1-(5-phospho-beta-D-ribosyl)imidazole-4-carboxamide + L-glutamine = D-erythro-1-(imidazol-4-yl)glycerol 3-phosphate + 5-amino-1-(5-phospho-beta-D-ribosyl)imidazole-4-carboxamide + L-glutamate + H(+). It carries out the reaction L-glutamine + H2O = L-glutamate + NH4(+). Its pathway is amino-acid biosynthesis; L-histidine biosynthesis; L-histidine from 5-phospho-alpha-D-ribose 1-diphosphate: step 5/9. Functionally, IGPS catalyzes the conversion of PRFAR and glutamine to IGP, AICAR and glutamate. The HisH subunit catalyzes the hydrolysis of glutamine to glutamate and ammonia as part of the synthesis of IGP and AICAR. The resulting ammonia molecule is channeled to the active site of HisF. The chain is Imidazole glycerol phosphate synthase subunit HisH from Leptospira interrogans serogroup Icterohaemorrhagiae serovar copenhageni (strain Fiocruz L1-130).